The sequence spans 292 residues: uncharacterized protein (292 aa).

Active-site charge relay system residues include S44 and Y106. Y132 functions as the Proton donor in the catalytic mechanism. K161 serves as the catalytic Schiff-base intermediate with substrate.

Belongs to the DapA family. As to quaternary structure, homotetramer.

It localises to the cytoplasm. This is an uncharacterized protein from Thermoplasma acidophilum (strain ATCC 25905 / DSM 1728 / JCM 9062 / NBRC 15155 / AMRC-C165).